The primary structure comprises 350 residues: MKMTFCRAVCLAAAFLLMGCDEAPETTTASPAAQVLEGKTMGTLWRVSVVGIDAKRAAELQTKIQTQLDADDWLLSTYKNDSALMRFNHSRSLAPWPVSEAMADIVTSALRIGAKTDGAMDITVGPLVNLWGFGPDRQPLHIPTPAQIDAAKAKTGLQHLQVIDRAGHQFLQKDLPDLYVDLSTVGEGYAADHLARLMEQEGIARYLVSVGGALSSRGMNAQGQPWRVAIQKPTDRENAVQAIVDINGHGISTSGSYRNYYELDGKRVSHVIDPQTGRPIEHNLVSVTVIAPTALEADGWDTGLMVLGTQKAQEVVRREGLAVFMIMKEGEGFKTWMSPQFKTFLVSDKN.

The signal sequence occupies residues Met1–Gly19. Cys20 is lipidated: N-palmitoyl cysteine. Cys20 is lipidated: S-diacylglycerol cysteine. Residues Met41, Tyr78, Ala119–Asp121, and Asp181 each bind FAD. Position 184 (Thr184) interacts with Mg(2+). FAD-binding residues include Glu187 and Ile272. 3 residues coordinate Mg(2+): Asp298, Asp301, and Thr302.

The protein belongs to the ApbE family. Homodimer. Requires Mg(2+) as cofactor.

Its subcellular location is the cell inner membrane. The catalysed reaction is L-threonyl-[protein] + FAD = FMN-L-threonyl-[protein] + AMP + H(+). In terms of biological role, flavin transferase that catalyzes the transfer of the FMN moiety of FAD and its covalent binding to the hydroxyl group of a threonine residue in a target flavoprotein such as NqrB and NqrC, two subunits of the NQR complex. This Salmonella typhimurium (strain LT2 / SGSC1412 / ATCC 700720) protein is FAD:protein FMN transferase.